Reading from the N-terminus, the 321-residue chain is uncharacterized protein (321 aa).

An ATP-binding site is contributed by 28-35 (GPINSGKT).

This sequence belongs to the archaeal ATPase family.

This is an uncharacterized protein from Pyrococcus horikoshii (strain ATCC 700860 / DSM 12428 / JCM 9974 / NBRC 100139 / OT-3).